The following is a 515-amino-acid chain: RNA-splicing ligase RtcB homolog (515 aa).

5 residues coordinate Mn(2+): D129, C132, H237, H269, and H363. Residue 236–240 coordinates GMP; the sequence is NHYAE. GMP contacts are provided by residues 363-364, 412-415, S419, 438-441, and K514; these read HN, GGTM, and HGAG. The active-site GMP-histidine intermediate is the H438.

It belongs to the RtcB family. In terms of assembly, catalytic component of the tRNA-splicing ligase complex. The cofactor is Mn(2+).

It carries out the reaction a 3'-end 3'-phospho-ribonucleotide-RNA + a 5'-end dephospho-ribonucleoside-RNA + GTP = a ribonucleotidyl-ribonucleotide-RNA + GMP + diphosphate. The catalysed reaction is a 3'-end 2',3'-cyclophospho-ribonucleotide-RNA + a 5'-end dephospho-ribonucleoside-RNA + GTP + H2O = a ribonucleotidyl-ribonucleotide-RNA + GMP + diphosphate + H(+). Catalytic subunit of the tRNA-splicing ligase complex that acts by directly joining spliced tRNA halves to mature-sized tRNAs by incorporating the precursor-derived splice junction phosphate into the mature tRNA as a canonical 3',5'-phosphodiester. May act as an RNA ligase with broad substrate specificity, and may function toward other RNAs. This is RNA-splicing ligase RtcB homolog from Ostreococcus tauri.